A 163-amino-acid polypeptide reads, in one-letter code: UPF0262 protein RPC_4416 (163 aa).

This sequence belongs to the UPF0262 family.

This is UPF0262 protein RPC_4416 from Rhodopseudomonas palustris (strain BisB18).